A 628-amino-acid chain; its full sequence is FAD-linked oxidoreductase hmp9 (628 aa).

A signal peptide spans 1 to 29 (MFCIIRAQLLLLLHLLVLALLLVGTVCNA). A disordered region spans residues 34–53 (GHPSELEPLALKRGGSPRDD). N-linked (GlcNAc...) asparagine glycosylation is found at Asn80 and Asn133. The FAD-binding PCMH-type domain maps to 152 to 337 (LGQLPVYAID…LKTKIKAYPN (186 aa)). N-linked (GlcNAc...) asparagine glycosylation occurs at Asn356.

This sequence belongs to the oxygen-dependent FAD-linked oxidoreductase family.

Its pathway is secondary metabolite biosynthesis. Its function is as follows. FAD-linked oxidoreductase; part of the gene cluster that mediates the biosynthesis of hypothemycin, a resorcylic acid lactone (RAL) that irreversibly inhibits a subset of protein kinases with a conserved cysteine in the ATP binding site such as human ERK2. The first step is performed by both PKSs hmp3 and hmp8 and leads to the production of 7',8'-dehydrozearalenol (DHZ). The highly reducing PKS hpm8 synthesizes the reduced hexaketide (7S,11S,2E,8E)-7,11-dihydroxy-dodeca-2,8-dienoate, which is transferred downstream to the non-reducing PKS hpm3. Hpm3 then extends the reduced hexaketide to a nonaketide, after which regioselective cyclization and macrolactonization affords DHZ. The next step is the conversion of DHZ into aigialomycin C and is performed by the O-methyltransferase hmp5, the FAD-binding monooxygenase hmp7, and the cytochrome P450 monooxygenase hmp1. The wide substrate tolerance of the hmp5 and hmp7 implies that the reactions from DHZ to aigialomycin C can occur in any order. The steps from aigialomycin C to hypothemycin are less well established. The FAD-linked oxidoreductase hmp9 presumably catalyzes oxidation of the C-6' hydroxyl to a ketone. The timing of this oxidation is important, since the resulting enone functional group is a Michael acceptor that can react spontaneously with glutathione, an abundant metabolite in fungal cells. The glutathione S-transferase hmp2 catalyzes cis-trans isomerization of the 7',8' double bond with equilibrium favoring the trans isomer. The hpm6-encoded transporter might preferentially pump hypothemycin out of the cell relative to the trans isomer aigialomycin A. The cis-to-trans isomerization may be coupled with C-4' hydroxylation, since all known hypothemycin analogs containing the enone functional group also have hydroxyl groups at both C-4' and C-5'. This Hypomyces subiculosus (Nectria subiculosa) protein is FAD-linked oxidoreductase hmp9.